The primary structure comprises 825 residues: Probable inorganic carbon transporter subunit DabA (825 aa).

Residues Cys-346, Asp-348, His-516, and Cys-531 each contribute to the Zn(2+) site.

The protein belongs to the inorganic carbon transporter (TC 9.A.2) DabA family. Forms a complex with DabB. It depends on Zn(2+) as a cofactor.

Its subcellular location is the cell inner membrane. Part of an energy-coupled inorganic carbon pump. This chain is Probable inorganic carbon transporter subunit DabA, found in Paracidovorax citrulli (strain AAC00-1) (Acidovorax citrulli).